Reading from the N-terminus, the 146-residue chain is Snaclec coagulation factor IX/factor X-binding protein subunit B (146 aa).

A signal peptide spans Met1–Ala23. One can recognise a C-type lectin domain in the interval Asp24–Ala146. 3 disulfides stabilise this stretch: Cys25/Cys36, Cys53/Cys142, and Cys119/Cys134. Ser64, Gln66, and Glu70 together coordinate Ca(2+). Glu143 is a Ca(2+) binding site.

This sequence belongs to the snaclec family. Heterodimer with subunit A of IX/X-bp or IX-bp; disulfide-linked. In terms of tissue distribution, expressed by the venom gland.

The protein resides in the secreted. In terms of biological role, when linked to subunit A of IX/X-bp, anticoagulant protein which binds to the gamma-carboxyglutamic acid-domain regions of factors IX (F9) and factor X (10) in the presence of calcium with a 1 to 1 stoichiometry. When linked to subunit A of IX-bp, anticoagulant protein which binds to the gamma-carboxyglutamic acid-domain regions of factor IX (but not to factor X) in the presence of calcium with a 1 to 1 stoichiometry. The chain is Snaclec coagulation factor IX/factor X-binding protein subunit B from Protobothrops flavoviridis (Habu).